The chain runs to 397 residues: CCA-adding enzyme (397 aa).

The ATP site is built by G26 and R29. Positions 26 and 29 each coordinate CTP. Mg(2+)-binding residues include D39 and D41. Residues R110, D153, R156, R159, and R162 each contribute to the ATP site. The CTP site is built by R110, D153, R156, R159, and R162.

This sequence belongs to the tRNA nucleotidyltransferase/poly(A) polymerase family. Bacterial CCA-adding enzyme type 3 subfamily. Homodimer. It depends on Mg(2+) as a cofactor.

It catalyses the reaction a tRNA precursor + 2 CTP + ATP = a tRNA with a 3' CCA end + 3 diphosphate. It carries out the reaction a tRNA with a 3' CCA end + 2 CTP + ATP = a tRNA with a 3' CCACCA end + 3 diphosphate. Functionally, catalyzes the addition and repair of the essential 3'-terminal CCA sequence in tRNAs without using a nucleic acid template. Adds these three nucleotides in the order of C, C, and A to the tRNA nucleotide-73, using CTP and ATP as substrates and producing inorganic pyrophosphate. tRNA 3'-terminal CCA addition is required both for tRNA processing and repair. Also involved in tRNA surveillance by mediating tandem CCA addition to generate a CCACCA at the 3' terminus of unstable tRNAs. While stable tRNAs receive only 3'-terminal CCA, unstable tRNAs are marked with CCACCA and rapidly degraded. This is CCA-adding enzyme from Bacillus mycoides (strain KBAB4) (Bacillus weihenstephanensis).